Reading from the N-terminus, the 77-residue chain is Large ribosomal subunit protein bL28 (77 aa).

The disordered stretch occupies residues 1-25; that stretch reads MARVCQVTGKAPMSGNNVSHANNKT.

This sequence belongs to the bacterial ribosomal protein bL28 family.

The polypeptide is Large ribosomal subunit protein bL28 (Paraburkholderia phytofirmans (strain DSM 17436 / LMG 22146 / PsJN) (Burkholderia phytofirmans)).